A 378-amino-acid chain; its full sequence is MLAPRRKTRQLMVGKVGVGSDHPISVQSMTTTKTHDINGTLQQIAQLTATGCDIVRVACPKTVDAEALPIIAKKSPIPVIADIHFQPKYIFAAIDAGCAAVRVNPGNIKEFDGRVKEVAKAAGDAGIPIRIGVNGGSLDKRILDKYHGKATPEALVESAMWEAGLFEEHGFGDIAISVKHSDPVLMVEAYRQLAEQSDYPLHLGVTEAGPKFMGTIKSSVAFGALLSQGIGDTIRVSLSADPVEEIKVGDQILQSLNLRPRKLEIVSCPSCGRAQVDVYSLAEEVTEALDGMEVPLRVAVMGCVVNGPGEARDADLGVASGNGKGQIFVKGEVIKTVPESQIVETLIEEAMRIAEEMDPEVLAAASASGMKAEVKVTK.

Residues C268, C271, C303, and E310 each contribute to the [4Fe-4S] cluster site.

It belongs to the IspG family. [4Fe-4S] cluster is required as a cofactor.

It catalyses the reaction (2E)-4-hydroxy-3-methylbut-2-enyl diphosphate + oxidized [flavodoxin] + H2O + 2 H(+) = 2-C-methyl-D-erythritol 2,4-cyclic diphosphate + reduced [flavodoxin]. It participates in isoprenoid biosynthesis; isopentenyl diphosphate biosynthesis via DXP pathway; isopentenyl diphosphate from 1-deoxy-D-xylulose 5-phosphate: step 5/6. Functionally, converts 2C-methyl-D-erythritol 2,4-cyclodiphosphate (ME-2,4cPP) into 1-hydroxy-2-methyl-2-(E)-butenyl 4-diphosphate. The sequence is that of 4-hydroxy-3-methylbut-2-en-1-yl diphosphate synthase (flavodoxin) from Corynebacterium glutamicum (strain ATCC 13032 / DSM 20300 / JCM 1318 / BCRC 11384 / CCUG 27702 / LMG 3730 / NBRC 12168 / NCIMB 10025 / NRRL B-2784 / 534).